We begin with the raw amino-acid sequence, 343 residues long: Ubiquitin carboxyl-terminal hydrolase isozyme L5 (343 aa).

One can recognise a UCH catalytic domain in the interval 6-218 (GWCTIESDPG…IRFNLMAVIK (213 aa)). Cys83 (nucleophile) is an active-site residue. His157 functions as the Proton donor in the catalytic mechanism. The tract at residues 242–266 (LSELNSGSGGDNKEESGGATPTTKE) is disordered. Residues 306 to 334 (NFTPLILNLIKGLAEKDNLQPLIQKAKDQ) enclose the ULD domain.

This sequence belongs to the peptidase C12 family. As to quaternary structure, component of the 19S (PA700) regulatory complex of the 26S proteasome.

The protein resides in the cytoplasm. It is found in the nucleus. The catalysed reaction is Thiol-dependent hydrolysis of ester, thioester, amide, peptide and isopeptide bonds formed by the C-terminal Gly of ubiquitin (a 76-residue protein attached to proteins as an intracellular targeting signal).. Its function is as follows. Protease that specifically cleaves 'Lys-48'-linked polyubiquitin chains. Deubiquitinating enzyme associated with the 19S regulatory subunit of the 26S proteasome. This Dictyostelium discoideum (Social amoeba) protein is Ubiquitin carboxyl-terminal hydrolase isozyme L5 (uch2).